A 289-amino-acid polypeptide reads, in one-letter code: Phosphatidylserine decarboxylase proenzyme (289 aa).

Active-site charge relay system; for autoendoproteolytic cleavage activity residues include Asp92, His149, and Ser254. Ser254 serves as the catalytic Schiff-base intermediate with substrate; via pyruvic acid; for decarboxylase activity. Ser254 is modified (pyruvic acid (Ser); by autocatalysis).

Belongs to the phosphatidylserine decarboxylase family. PSD-B subfamily. Prokaryotic type I sub-subfamily. In terms of assembly, heterodimer of a large membrane-associated beta subunit and a small pyruvoyl-containing alpha subunit. It depends on pyruvate as a cofactor. Is synthesized initially as an inactive proenzyme. Formation of the active enzyme involves a self-maturation process in which the active site pyruvoyl group is generated from an internal serine residue via an autocatalytic post-translational modification. Two non-identical subunits are generated from the proenzyme in this reaction, and the pyruvate is formed at the N-terminus of the alpha chain, which is derived from the carboxyl end of the proenzyme. The autoendoproteolytic cleavage occurs by a canonical serine protease mechanism, in which the side chain hydroxyl group of the serine supplies its oxygen atom to form the C-terminus of the beta chain, while the remainder of the serine residue undergoes an oxidative deamination to produce ammonia and the pyruvoyl prosthetic group on the alpha chain. During this reaction, the Ser that is part of the protease active site of the proenzyme becomes the pyruvoyl prosthetic group, which constitutes an essential element of the active site of the mature decarboxylase.

The protein resides in the cell membrane. It carries out the reaction a 1,2-diacyl-sn-glycero-3-phospho-L-serine + H(+) = a 1,2-diacyl-sn-glycero-3-phosphoethanolamine + CO2. It participates in phospholipid metabolism; phosphatidylethanolamine biosynthesis; phosphatidylethanolamine from CDP-diacylglycerol: step 2/2. Functionally, catalyzes the formation of phosphatidylethanolamine (PtdEtn) from phosphatidylserine (PtdSer). This is Phosphatidylserine decarboxylase proenzyme from Pseudomonas aeruginosa (strain LESB58).